Here is a 365-residue protein sequence, read N- to C-terminus: Peptide chain release factor 1 (365 aa).

Gln236 bears the N5-methylglutamine mark.

This sequence belongs to the prokaryotic/mitochondrial release factor family. In terms of processing, methylated by PrmC. Methylation increases the termination efficiency of RF1.

The protein resides in the cytoplasm. Functionally, peptide chain release factor 1 directs the termination of translation in response to the peptide chain termination codons UAG and UAA. This is Peptide chain release factor 1 from Latilactobacillus sakei subsp. sakei (strain 23K) (Lactobacillus sakei subsp. sakei).